The sequence spans 124 residues: Large ribosomal subunit protein bL12 (124 aa).

It belongs to the bacterial ribosomal protein bL12 family. Homodimer. Part of the ribosomal stalk of the 50S ribosomal subunit. Forms a multimeric L10(L12)X complex, where L10 forms an elongated spine to which 2 to 4 L12 dimers bind in a sequential fashion. Binds GTP-bound translation factors.

Functionally, forms part of the ribosomal stalk which helps the ribosome interact with GTP-bound translation factors. Is thus essential for accurate translation. The polypeptide is Large ribosomal subunit protein bL12 (Xanthobacter autotrophicus (strain ATCC BAA-1158 / Py2)).